Reading from the N-terminus, the 606-residue chain is Armadillo repeat-containing X-linked protein 5 (606 aa).

The disordered stretch occupies residues 1-85; sequence MIGSKTKRKA…KVKKKKDKTN (85 aa). The span at 15–26 shows a compositional bias: polar residues; that stretch reads GASSKPGTNSPA. The segment covering 40–59 has biased composition (basic and acidic residues); it reads VKAEPKEEWGNQAEARDEAV. ARM repeat units lie at residues 349-388, 470-509, 511-551, and 568-606; these read CKSR…GISP, VKFD…CLSK, QANT…NINF, and SELI…ILKL.

Belongs to the eutherian X-chromosome-specific Armcx family. In terms of tissue distribution, highly expressed in the developing neural tissues, neural crest derivatives and hind limbs.

The chain is Armadillo repeat-containing X-linked protein 5 (Armcx5) from Mus musculus (Mouse).